We begin with the raw amino-acid sequence, 486 residues long: Serine/threonine-protein kinase 33 (486 aa).

The segment at valine 39 to lysine 100 is disordered. Over residues glutamate 41 to phenylalanine 53 the composition is skewed to polar residues. The span at proline 57–serine 66 shows a compositional bias: basic and acidic residues. Polar residues predominate over residues aspartate 68 to serine 80. Positions tyrosine 116–leucine 381 constitute a Protein kinase domain. ATP contacts are provided by residues leucine 122 to valine 130 and lysine 145. The active-site Proton acceptor is aspartate 238. A disordered region spans residues lysine 402 to arginine 451. At serine 407 the chain carries Phosphoserine. The span at threonine 413–lysine 426 shows a compositional bias: basic and acidic residues. Residues tyrosine 428–serine 440 are compositionally biased toward polar residues.

It belongs to the protein kinase superfamily. CAMK Ser/Thr protein kinase family. CaMK subfamily. Interacts with vimentin/VIM. In terms of processing, autophosphorylated.

The protein localises to the cytoplasm. It is found in the perinuclear region. The catalysed reaction is L-seryl-[protein] + ATP = O-phospho-L-seryl-[protein] + ADP + H(+). The enzyme catalyses L-threonyl-[protein] + ATP = O-phospho-L-threonyl-[protein] + ADP + H(+). Serine/threonine protein kinase which phosphorylates vimentin/VIM. Therefore may play a specific role in the dynamic behavior of the intermediate filament cytoskeleton. The sequence is that of Serine/threonine-protein kinase 33 (STK33) from Bos taurus (Bovine).